A 269-amino-acid polypeptide reads, in one-letter code: Gem-associated protein 2 (269 aa).

Phosphoserine occurs at positions 70 and 155.

Belongs to the gemin-2 family. In terms of assembly, monomer. Part of the core SMN complex that contains SMN1, GEMIN2/SIP1, DDX20/GEMIN3, GEMIN4, GEMIN5, GEMIN6, GEMIN7, GEMIN8 and STRAP/UNRIP. Part of the SMN-Sm complex that contains SMN1, GEMIN2/SIP1, DDX20/GEMIN3, GEMIN4, GEMIN5, GEMIN6, GEMIN7, GEMIN8, STRAP/UNRIP and the Sm proteins SNRPB, SNRPD1, SNRPD2, SNRPD3, SNRPE, SNRPF and SNRPG. Interacts with GEMIN5; the interaction is direct. Interacts (via C-terminus) with SMN1; the interaction is direct. Interacts with SNRPD1; the interaction is direct. Interacts with SNRPD2; the interaction is direct. Interacts (via N-terminus) with SNRPF; the interaction is direct. Interacts (via N-terminus) with SNRPE; the interaction is direct. Interacts (via N-terminus) with SNRPG; the interaction is direct.

It localises to the nucleus. The protein resides in the gem. It is found in the cytoplasm. In terms of biological role, the SMN complex catalyzes the assembly of small nuclear ribonucleoproteins (snRNPs), the building blocks of the spliceosome, and thereby plays an important role in the splicing of cellular pre-mRNAs. Most spliceosomal snRNPs contain a common set of Sm proteins SNRPB, SNRPD1, SNRPD2, SNRPD3, SNRPE, SNRPF and SNRPG that assemble in a heptameric protein ring on the Sm site of the small nuclear RNA to form the core snRNP (Sm core). In the cytosol, the Sm proteins SNRPD1, SNRPD2, SNRPE, SNRPF and SNRPG (5Sm) are trapped in an inactive 6S pICln-Sm complex by the chaperone CLNS1A that controls the assembly of the core snRNP. To assemble core snRNPs, the SMN complex accepts the trapped 5Sm proteins from CLNS1A. Binding of snRNA inside 5Sm ultimately triggers eviction of the SMN complex, thereby allowing binding of SNRPD3 and SNRPB to complete assembly of the core snRNP. Within the SMN complex, GEMIN2 constrains the conformation of 5Sm, thereby promoting 5Sm binding to snRNA containing the snRNP code (a nonameric Sm site and a 3'-adjacent stem-loop), thus preventing progression of assembly until a cognate substrate is bound. The protein is Gem-associated protein 2 of Mus musculus (Mouse).